The chain runs to 491 residues: Ketol-acid reductoisomerase (NADP(+)) (491 aa).

Residues 15–208 (AQLGKCRFMA…GGHRAGVLES (194 aa)) form the KARI N-terminal Rossmann domain. NADP(+)-binding positions include 45 to 48 (CGAQ), Arg68, Arg76, Ser78, and 108 to 110 (DKQ). His132 is an active-site residue. Residue Gly158 coordinates NADP(+). KARI C-terminal knotted domains lie at 209–344 (SFVA…TASQ) and 345–484 (FDGK…MKDM). Positions 217, 221, 389, and 393 each coordinate Mg(2+). Residue Ser414 participates in substrate binding.

This sequence belongs to the ketol-acid reductoisomerase family. It depends on Mg(2+) as a cofactor.

The catalysed reaction is (2R)-2,3-dihydroxy-3-methylbutanoate + NADP(+) = (2S)-2-acetolactate + NADPH + H(+). The enzyme catalyses (2R,3R)-2,3-dihydroxy-3-methylpentanoate + NADP(+) = (S)-2-ethyl-2-hydroxy-3-oxobutanoate + NADPH + H(+). Its pathway is amino-acid biosynthesis; L-isoleucine biosynthesis; L-isoleucine from 2-oxobutanoate: step 2/4. It functions in the pathway amino-acid biosynthesis; L-valine biosynthesis; L-valine from pyruvate: step 2/4. Its function is as follows. Involved in the biosynthesis of branched-chain amino acids (BCAA). Catalyzes an alkyl-migration followed by a ketol-acid reduction of (S)-2-acetolactate (S2AL) to yield (R)-2,3-dihydroxy-isovalerate. In the isomerase reaction, S2AL is rearranged via a Mg-dependent methyl migration to produce 3-hydroxy-3-methyl-2-ketobutyrate (HMKB). In the reductase reaction, this 2-ketoacid undergoes a metal-dependent reduction by NADPH to yield (R)-2,3-dihydroxy-isovalerate. In Enterobacter sp. (strain 638), this protein is Ketol-acid reductoisomerase (NADP(+)).